The chain runs to 335 residues: 34 kDa spicule matrix protein (335 aa).

The first 17 residues, 1-17, serve as a signal peptide directing secretion; it reads MKGLLLILASLVAIATG. Positions 29 to 194 constitute a C-type lectin domain; it reads SGASCYRYFN…ATAMRAFVCE (166 aa). An intrachain disulfide couples C50 to C193. Residues 199–335 form a disordered region; that stretch reads QNIPPGQQPG…QEAETDVTGS (137 aa). Residues 207 to 310 show a composition bias toward gly residues; the sequence is PGFGGQQPGF…GGPQRPGMGG (104 aa). Over residues 311–323 the composition is skewed to low complexity; that stretch reads QPNSPNPRFNRPR.

The protein belongs to the SM50 family. Embryo spicule.

It localises to the secreted. Major matrix protein of the sea urchin embryo spicule which directs crystal growth in certain orientations and inhibit growth in others. This chain is 34 kDa spicule matrix protein, found in Lytechinus pictus (Painted sea urchin).